The chain runs to 223 residues: ATP-dependent dethiobiotin synthetase BioD (223 aa).

Threonine 16 contributes to the Mg(2+) binding site. Lysine 37 is a catalytic residue. Serine 41 contacts substrate. Residues aspartate 50 and glutamate 111 each contribute to the Mg(2+) site. ATP contacts are provided by residues aspartate 50, 111 to 114 (EGAG), 171 to 172 (NQ), 201 to 203 (AHV), and glutamate 208.

This sequence belongs to the dethiobiotin synthetase family. In terms of assembly, homodimer. The cofactor is Mg(2+).

It is found in the cytoplasm. The catalysed reaction is (7R,8S)-7,8-diammoniononanoate + CO2 + ATP = (4R,5S)-dethiobiotin + ADP + phosphate + 3 H(+). It functions in the pathway cofactor biosynthesis; biotin biosynthesis; biotin from 7,8-diaminononanoate: step 1/2. In terms of biological role, catalyzes a mechanistically unusual reaction, the ATP-dependent insertion of CO2 between the N7 and N8 nitrogen atoms of 7,8-diaminopelargonic acid (DAPA, also called 7,8-diammoniononanoate) to form a ureido ring. The sequence is that of ATP-dependent dethiobiotin synthetase BioD from Anaeromyxobacter sp. (strain Fw109-5).